Consider the following 159-residue polypeptide: SsrA-binding protein (159 aa).

Over residues 138-153 (KREDGKDKDWSREKER) the composition is skewed to basic and acidic residues. The interval 138–159 (KREDGKDKDWSREKERLMKHKA) is disordered.

Belongs to the SmpB family.

Its subcellular location is the cytoplasm. Its function is as follows. Required for rescue of stalled ribosomes mediated by trans-translation. Binds to transfer-messenger RNA (tmRNA), required for stable association of tmRNA with ribosomes. tmRNA and SmpB together mimic tRNA shape, replacing the anticodon stem-loop with SmpB. tmRNA is encoded by the ssrA gene; the 2 termini fold to resemble tRNA(Ala) and it encodes a 'tag peptide', a short internal open reading frame. During trans-translation Ala-aminoacylated tmRNA acts like a tRNA, entering the A-site of stalled ribosomes, displacing the stalled mRNA. The ribosome then switches to translate the ORF on the tmRNA; the nascent peptide is terminated with the 'tag peptide' encoded by the tmRNA and targeted for degradation. The ribosome is freed to recommence translation, which seems to be the essential function of trans-translation. The sequence is that of SsrA-binding protein from Pseudoalteromonas translucida (strain TAC 125).